The primary structure comprises 163 residues: MCWRPLCRLWSYLVYVQAVPCQIFQDDTKTLIKTIVTRINDISHTSVSAKQRVTGLDFIPGLHPILSLSKMDQTLAVYQQVLTSLPSQNVLQIANDLENLRDLLHLLAFSKSCSLPQTSGLQKPESLDGVLEASLYSTEVVALSRLQGSLQDILQQLDISPEC.

Positions 1 to 18 are cleaved as a signal peptide; that stretch reads MCWRPLCRLWSYLVYVQA. Cysteine 113 and cysteine 163 are oxidised to a cystine.

It belongs to the leptin family. In terms of tissue distribution, not exclusively localized in adipose tissue but is also expressed in liver.

Its subcellular location is the secreted. Its function is as follows. Key player in the regulation of energy balance and body weight control. Once released into the circulation, has central and peripheral effects by binding LEPR, found in many tissues, which results in the activation of several major signaling pathways. This is Leptin (LEP) from Gallus gallus (Chicken).